A 594-amino-acid chain; its full sequence is MQVSKDALKQLIRAGRGVIPASKVLEGGYLVNVMSNEVYLADVAIYEERIVAIGKVEEYKGPETEVIDVTGLYLLPGLIDGHLHSECSKLSITSFAKAVVPCGTTSIVSGLDEYISVSGLEGLQEVFKEVKKSPLKVFWGAPYKTPYTFPKSTVAFNFTEEVHQEVQQWPECFGVWETVREAVQEEDEDTLGALATAQNNRLPIFGCAPMARGKELNGYLCAGVRLDHESYDHEEVVEKMRNGMHMLIRESSVTHFLEENIRAVTEVNPYLARRVSFCTDDVTATDILEKGHMDNVVRQAIKAGVEPITAIQMATINSAEAYRIDHLVGSITPGKIADIVMVDSLEGFQVQAVLTDGKLVARDKKMSYELKAPARSSVLSCALKCATTTPEDFQYRVEIEQGTAEVLSMNVKGPFVRKRRDVTLQVANHIVQADTENDVLMVSVLERFGRNGNKSLAFCSGWKLKKGAMASSAAPDDNNIIVMGADASDMSIAVNHLIENGGGQVIVADGEILEFLALPVGGIVSDLEAEEIARQESLLTKAANSLGCDLPDPLMYMFFLPITAIPDYAITDVGPVDCIALTTFDPILALNPGK.

The protein belongs to the metallo-dependent hydrolases superfamily. Adenine deaminase family. The cofactor is Mn(2+).

It catalyses the reaction adenine + H2O + H(+) = hypoxanthine + NH4(+). This Desulfotalea psychrophila (strain LSv54 / DSM 12343) protein is Adenine deaminase 1.